Consider the following 355-residue polypeptide: UDP-N-acetylglucosamine--N-acetylmuramyl-(pentapeptide) pyrophosphoryl-undecaprenol N-acetylglucosamine transferase (355 aa).

Residues Thr-15 to Gly-17, Asn-127, Arg-163, Ser-191, Ile-244, Ala-263 to Glu-268, and Gln-288 contribute to the UDP-N-acetyl-alpha-D-glucosamine site.

Belongs to the glycosyltransferase 28 family. MurG subfamily.

It is found in the cell inner membrane. It carries out the reaction di-trans,octa-cis-undecaprenyl diphospho-N-acetyl-alpha-D-muramoyl-L-alanyl-D-glutamyl-meso-2,6-diaminopimeloyl-D-alanyl-D-alanine + UDP-N-acetyl-alpha-D-glucosamine = di-trans,octa-cis-undecaprenyl diphospho-[N-acetyl-alpha-D-glucosaminyl-(1-&gt;4)]-N-acetyl-alpha-D-muramoyl-L-alanyl-D-glutamyl-meso-2,6-diaminopimeloyl-D-alanyl-D-alanine + UDP + H(+). The protein operates within cell wall biogenesis; peptidoglycan biosynthesis. Functionally, cell wall formation. Catalyzes the transfer of a GlcNAc subunit on undecaprenyl-pyrophosphoryl-MurNAc-pentapeptide (lipid intermediate I) to form undecaprenyl-pyrophosphoryl-MurNAc-(pentapeptide)GlcNAc (lipid intermediate II). The polypeptide is UDP-N-acetylglucosamine--N-acetylmuramyl-(pentapeptide) pyrophosphoryl-undecaprenol N-acetylglucosamine transferase (Citrobacter koseri (strain ATCC BAA-895 / CDC 4225-83 / SGSC4696)).